Here is a 341-residue protein sequence, read N- to C-terminus: Foldase protein PrsA (341 aa).

The signal sequence occupies residues 1 to 22 (MKNIGRLAVTALIAVFIFSVTG). C23 carries N-palmitoyl cysteine lipidation. C23 carries S-diacylglycerol cysteine lipidation. Positions 199-291 (PNKMHLAHIL…FGYHIIKCIK (93 aa)) constitute a PpiC domain.

This sequence belongs to the PrsA family.

It is found in the cell membrane. The catalysed reaction is [protein]-peptidylproline (omega=180) = [protein]-peptidylproline (omega=0). Functionally, plays a major role in protein secretion by helping the post-translocational extracellular folding of several secreted proteins. The polypeptide is Foldase protein PrsA (Clostridium kluyveri (strain NBRC 12016)).